The primary structure comprises 208 residues: Outer-membrane lipoprotein LolB (208 aa).

Residues 1 to 23 (MKPIQKLSLFRLLPLSCVLLLTA) form the signal peptide. C24 carries N-palmitoyl cysteine lipidation. C24 is lipidated: S-diacylglycerol cysteine.

It belongs to the LolB family. Monomer.

The protein localises to the cell outer membrane. Its function is as follows. Plays a critical role in the incorporation of lipoproteins in the outer membrane after they are released by the LolA protein. This is Outer-membrane lipoprotein LolB from Photorhabdus laumondii subsp. laumondii (strain DSM 15139 / CIP 105565 / TT01) (Photorhabdus luminescens subsp. laumondii).